The chain runs to 446 residues: uncharacterized protein (446 aa).

Residues 141–282 (TEAETNGTRP…GPKPKVKRVS (142 aa)) form a disordered region. Over residues 159-170 (NSGSKPKAGTQS) the composition is skewed to polar residues. The span at 194–210 (IKSERRSISQGGEKDKA) shows a compositional bias: basic and acidic residues. Serine 200, serine 202, serine 212, and serine 214 each carry phosphoserine. Composition is skewed to low complexity over residues 211–221 (SSSSPSSSQQS) and 229–239 (SPSQQNSRSSS). Serine 251 carries the post-translational modification Phosphoserine. Over residues 269–280 (GKSRGPKPKVKR) the composition is skewed to basic residues. Phosphoserine is present on residues serine 282 and serine 307.

This is an uncharacterized protein from Drosophila melanogaster (Fruit fly).